Consider the following 82-residue polypeptide: U-actitoxin-Avd3l (82 aa).

The signal sequence occupies residues 1-16; that stretch reads MVFLLCFFLVADVSYG. One can recognise a BPTI/Kunitz inhibitor domain in the interval 21-71; that stretch reads CLLPMDVGRCRARFPRYYYNSSSRRCEKFNYGGCGGNANNFHTLEECEKVC. 3 disulfides stabilise this stretch: cysteine 21/cysteine 71, cysteine 30/cysteine 54, and cysteine 46/cysteine 67. Positions 76–82 are excised as a propeptide; the sequence is RDSPKEN.

Belongs to the venom Kunitz-type family. Sea anemone type 2 potassium channel toxin subfamily.

The protein localises to the secreted. Its subcellular location is the nematocyst. Its function is as follows. Dual-function toxin that inhibits both the serine protease trypsin and voltage-gated potassium channels Kv1.2/KCNA2. This is U-actitoxin-Avd3l from Anemonia viridis (Snakelocks anemone).